We begin with the raw amino-acid sequence, 368 residues long: 2-aminoethylphosphonate--pyruvate transaminase (368 aa).

Lys-192 bears the N6-(pyridoxal phosphate)lysine mark.

Belongs to the class-V pyridoxal-phosphate-dependent aminotransferase family. PhnW subfamily. As to quaternary structure, homodimer. Pyridoxal 5'-phosphate serves as cofactor.

The catalysed reaction is (2-aminoethyl)phosphonate + pyruvate = phosphonoacetaldehyde + L-alanine. Functionally, involved in phosphonate degradation. The protein is 2-aminoethylphosphonate--pyruvate transaminase of Pseudomonas entomophila (strain L48).